A 443-amino-acid polypeptide reads, in one-letter code: Transmembrane protein 184C (443 aa).

7 consecutive transmembrane segments (helical) span residues 15–35 (LVVL…IWKL), 46–66 (AWFI…WGIL), 84–104 (ILWM…YPDI), 182–202 (PVTT…EGDF), 210–230 (YLVI…VLFY), 252–272 (VVFV…AGVI), and 284–304 (VATG…AVAH). Positions 369–378 (TSLLSSSTQD) are enriched in polar residues. The interval 369–422 (TSLLSSSTQDPISAASSIPPSPSGHYQGFGQTITPQTTPTATTMPEELYSADSP) is disordered. Low complexity predominate over residues 399 to 411 (QTITPQTTPTATT).

This sequence belongs to the TMEM184 family.

It is found in the membrane. Its function is as follows. May play a role in cell growth. The chain is Transmembrane protein 184C (tmem184c) from Xenopus tropicalis (Western clawed frog).